The chain runs to 216 residues: Probable GTP-binding protein EngB (216 aa).

One can recognise an EngB-type G domain in the interval 43-216 (DRLEVCFAGR…TLRSIITDLT (174 aa)). Residues 51-58 (GRSNVGKS), 78-82 (GRTQE), 96-99 (DLPG), 163-166 (TKAD), and 197-199 (TSS) each bind GTP. Residues serine 58 and threonine 80 each coordinate Mg(2+).

It belongs to the TRAFAC class TrmE-Era-EngA-EngB-Septin-like GTPase superfamily. EngB GTPase family. Mg(2+) serves as cofactor.

Functionally, necessary for normal cell division and for the maintenance of normal septation. The polypeptide is Probable GTP-binding protein EngB (Roseobacter denitrificans (strain ATCC 33942 / OCh 114) (Erythrobacter sp. (strain OCh 114))).